Reading from the N-terminus, the 426-residue chain is Hemojuvelin (426 aa).

The first 35 residues, 1 to 35, serve as a signal peptide directing secretion; sequence MGEPGQSPSPRSSHGSPPTLSTLTLLLLLCGHAHS. Tyr-46 is subject to Phosphotyrosine. The N-linked (GlcNAc...) asparagine glycan is linked to Asn-118. Residues 119–142 are disordered; it reads CSRQGPTAPPPPRGPALPGAGSGL. 2 disulfides stabilise this stretch: Cys-148-Cys-230 and Cys-167-Cys-317. Residues Asn-213 and Asn-372 are each glycosylated (N-linked (GlcNAc...) asparagine). Asp-400 carries the GPI-anchor amidated aspartate lipid modification. A propeptide spans 401–426 (removed in mature form); it reads AGVPLSSATLLAPLLSGLFVLWLCIQ.

This sequence belongs to the repulsive guidance molecule (RGM) family. As to quaternary structure, interacts with BMP2 and BMP4. Interacts with BMP6. Interacts with BMPR1B. Interacts with TMPRSS6. Post-translationally, autocatalytically cleaved at low pH; the two chains remain linked via two disulfide bonds. Also proteolytically processed by TMPRSS6, several fragments being released in the extracellular space; regulates HJV activity in BMP signaling and thefore iron homeostasis. Adult and fetal liver, heart, and skeletal muscle.

It is found in the cell membrane. Acts as a bone morphogenetic protein (BMP) coreceptor. Through enhancement of BMP signaling regulates hepcidin (HAMP) expression and regulates iron homeostasis. This is Hemojuvelin from Homo sapiens (Human).